The chain runs to 198 residues: IMP cyclohydrolase (198 aa).

Belongs to the archaeal IMP cyclohydrolase family.

The catalysed reaction is IMP + H2O = 5-formamido-1-(5-phospho-D-ribosyl)imidazole-4-carboxamide. It participates in purine metabolism; IMP biosynthesis via de novo pathway; IMP from 5-formamido-1-(5-phospho-D-ribosyl)imidazole-4-carboxamide: step 1/1. Catalyzes the cyclization of 5-formylamidoimidazole-4-carboxamide ribonucleotide to IMP. This is IMP cyclohydrolase from Methanopyrus kandleri (strain AV19 / DSM 6324 / JCM 9639 / NBRC 100938).